Reading from the N-terminus, the 110-residue chain is Large ribosomal subunit protein uL22 (110 aa).

The protein belongs to the universal ribosomal protein uL22 family. In terms of assembly, part of the 50S ribosomal subunit.

Its function is as follows. This protein binds specifically to 23S rRNA; its binding is stimulated by other ribosomal proteins, e.g. L4, L17, and L20. It is important during the early stages of 50S assembly. It makes multiple contacts with different domains of the 23S rRNA in the assembled 50S subunit and ribosome. The globular domain of the protein is located near the polypeptide exit tunnel on the outside of the subunit, while an extended beta-hairpin is found that lines the wall of the exit tunnel in the center of the 70S ribosome. In Campylobacter fetus subsp. fetus (strain 82-40), this protein is Large ribosomal subunit protein uL22.